A 409-amino-acid chain; its full sequence is FBD-associated F-box protein At4g10400 (409 aa).

Residues 1–47 (MDRISGLPDEVLVKILSFVPTKVAVSTSILSKRWEFLWMWLTKLKFG) enclose the F-box domain. One can recognise an FBD domain in the interval 330–379 (SWNQPSIVPECMLSSLQKFTWFKYLGRPQDRDIAVYILKNACRLRTATIK).

The chain is FBD-associated F-box protein At4g10400 from Arabidopsis thaliana (Mouse-ear cress).